Here is a 697-residue protein sequence, read N- to C-terminus: Elongation factor G (697 aa).

The tr-type G domain occupies 8–290 (ERYRNFGIMA…AVVDYLPSPL (283 aa)). GTP is bound by residues 17–24 (AHIDAGKT), 88–92 (DTPGH), and 142–145 (NKLD).

It belongs to the TRAFAC class translation factor GTPase superfamily. Classic translation factor GTPase family. EF-G/EF-2 subfamily.

The protein localises to the cytoplasm. Functionally, catalyzes the GTP-dependent ribosomal translocation step during translation elongation. During this step, the ribosome changes from the pre-translocational (PRE) to the post-translocational (POST) state as the newly formed A-site-bound peptidyl-tRNA and P-site-bound deacylated tRNA move to the P and E sites, respectively. Catalyzes the coordinated movement of the two tRNA molecules, the mRNA and conformational changes in the ribosome. This Sphingopyxis alaskensis (strain DSM 13593 / LMG 18877 / RB2256) (Sphingomonas alaskensis) protein is Elongation factor G.